A 1072-amino-acid polypeptide reads, in one-letter code: Integrator complex subunit 3 homolog (1072 aa).

Disordered regions lie at residues 920–943 (YPSS…STPS) and 1002–1072 (DTTV…NDSD). Residues serine 1042, serine 1043, serine 1047, and serine 1048 each carry the phosphoserine modification.

Belongs to the Integrator subunit 3 family. Belongs to the multiprotein complex Integrator, at least composed of IntS1, IntS2, IntS3, IntS4, omd/IntS5, IntS6, defl/IntS7, IntS8, IntS9, IntS10, IntS11, IntS12, asun/IntS13, IntS14 and IntS15. The core complex associates with protein phosphatase 2A subunits mts/PP2A and Pp2A-29B, to form the Integrator-PP2A (INTAC) complex.

The protein resides in the nucleus. It localises to the cytoplasm. Functionally, component of the integrator complex, a multiprotein complex that terminates RNA polymerase II (Pol II) transcription in the promoter-proximal region of genes. The integrator complex provides a quality checkpoint during transcription elongation by driving premature transcription termination of transcripts that are unfavorably configured for transcriptional elongation: the complex terminates transcription by (1) catalyzing dephosphorylation of the C-terminal domain (CTD) of Pol II subunit Polr2A/Rbp1 and Spt5, and (2) degrading the exiting nascent RNA transcript via endonuclease activity. The integrator complex is also involved in the 3'-end processing of the U7 snRNA, and also the spliceosomal snRNAs U1, U2, U4 and U5. This is Integrator complex subunit 3 homolog (IntS3) from Drosophila yakuba (Fruit fly).